Consider the following 88-residue polypeptide: Small ribosomal subunit protein bS20 (88 aa).

Belongs to the bacterial ribosomal protein bS20 family.

Functionally, binds directly to 16S ribosomal RNA. This chain is Small ribosomal subunit protein bS20, found in Bradyrhizobium diazoefficiens (strain JCM 10833 / BCRC 13528 / IAM 13628 / NBRC 14792 / USDA 110).